The primary structure comprises 289 residues: Protease HtpX homolog (289 aa).

2 helical membrane-spanning segments follow: residues 8-28 (LALLAALSGLLIAISYWVIGG) and 29-49 (SSGLMIGIGLAAVTNLLSWYQ). Histidine 132 is a binding site for Zn(2+). The active site involves glutamate 133. A Zn(2+)-binding site is contributed by histidine 136. 2 helical membrane-spanning segments follow: residues 151 to 171 (VAGAISFLAQMVSYSLWFGGI) and 183 to 203 (LGVLLTVVLAPIAATIIQLAI). Glutamate 208 contributes to the Zn(2+) binding site.

It belongs to the peptidase M48B family. The cofactor is Zn(2+).

It is found in the cell inner membrane. The chain is Protease HtpX homolog from Nostoc sp. (strain PCC 7120 / SAG 25.82 / UTEX 2576).